Here is a 176-residue protein sequence, read N- to C-terminus: dCTP deaminase (176 aa).

Residues 99–104 (RSTLAR) and Asp115 contribute to the dCTP site. The active-site Proton donor/acceptor is the Glu125. Gln163 lines the dCTP pocket.

The protein belongs to the dCTP deaminase family. As to quaternary structure, homotrimer.

The catalysed reaction is dCTP + H2O + H(+) = dUTP + NH4(+). Its pathway is pyrimidine metabolism; dUMP biosynthesis; dUMP from dCTP (dUTP route): step 1/2. Catalyzes the deamination of dCTP to dUTP. This is dCTP deaminase from Pyrobaculum arsenaticum (strain DSM 13514 / JCM 11321 / PZ6).